The chain runs to 861 residues: Ribosome biogenesis protein BOP1 homolog (861 aa).

The interval 1 to 237 (MVANKSKATK…GDTSDEEDIR (237 aa)) is disordered. A compositionally biased stretch (polar residues) spans 29–45 (NGRSTKQPEADSDQSAS). Acidic residues-rich tracts occupy residues 62-77 (DDGD…DASD) and 87-143 (SDSD…EDLA). 3 stretches are compositionally biased toward basic and acidic residues: residues 144–156 (EPEK…EGSK), 174–190 (ETKK…EKLA), and 212–223 (PERKTGRLKNSD). 6 WD repeats span residues 522-561 (GHTD…CIKT), 563-603 (PTGD…CLLS), 692-730 (KSKG…LLKK), 733-772 (PSCK…RPYQ), 776-815 (LHFS…DLMQ), and 831-861 (VNDF…RLYT).

It belongs to the WD repeat BOP1/ERB1 family.

It is found in the nucleus. The protein localises to the nucleolus. It localises to the nucleoplasm. Functionally, required for maturation of ribosomal RNAs and formation of the large ribosomal subunit. This is Ribosome biogenesis protein BOP1 homolog from Culex quinquefasciatus (Southern house mosquito).